The primary structure comprises 213 residues: Cell division protein SepF 2 (213 aa).

Residues E16 to S63 form a disordered region. The segment covering P27–P39 has biased composition (acidic residues).

This sequence belongs to the SepF family. In terms of assembly, homodimer. Interacts with FtsZ.

Its subcellular location is the cytoplasm. Functionally, cell division protein that is part of the divisome complex and is recruited early to the Z-ring. Probably stimulates Z-ring formation, perhaps through the cross-linking of FtsZ protofilaments. Its function overlaps with FtsA. In Streptomyces avermitilis (strain ATCC 31267 / DSM 46492 / JCM 5070 / NBRC 14893 / NCIMB 12804 / NRRL 8165 / MA-4680), this protein is Cell division protein SepF 2.